The primary structure comprises 37 residues: NAD-reducing hydrogenase HoxS subunit alpha (37 aa).

This sequence belongs to the complex I 51 kDa subunit family. In terms of assembly, tetramer of an alpha and a gamma subunits (flavin-containing dimer), and a delta and a nickel-containing beta subunits (hydrogenase dimer). FMN serves as cofactor. [4Fe-4S] cluster is required as a cofactor.

The protein localises to the cytoplasm. It catalyses the reaction H2 + NAD(+) = NADH + H(+). Its function is as follows. Subunits alpha and gamma of HoxS constitute an NADH--oxidoreductase. This Rhodococcus opacus (Nocardia opaca) protein is NAD-reducing hydrogenase HoxS subunit alpha (hoxF).